Reading from the N-terminus, the 204-residue chain is Protein C (204 aa).

The disordered stretch occupies residues 1-78 (MPSFLRGILK…TEQSQRRPKI (78 aa)). The segment covering 10 to 20 (KPKERHHENKN) has biased composition (basic and acidic residues). Residues 25-34 (SSDSLTSSYP) show a composition bias toward low complexity.

The protein belongs to the respirovirus protein C family.

The protein is Protein C (P/V/C) of Homo sapiens (Human).